The sequence spans 169 residues: Large ribosomal subunit protein uL5 (169 aa).

Belongs to the universal ribosomal protein uL5 family. As to quaternary structure, part of the 50S ribosomal subunit; contacts the 5S rRNA and probably tRNA. Forms a bridge to the 30S subunit in the 70S ribosome.

In terms of biological role, this is one of the proteins that bind and probably mediate the attachment of the 5S RNA into the large ribosomal subunit, where it forms part of the central protuberance. In the 70S ribosome it contacts protein S13 of the 30S subunit (bridge B1b), connecting the 2 subunits; this bridge is implicated in subunit movement. May contact the P site tRNA; the 5S rRNA and some of its associated proteins might help stabilize positioning of ribosome-bound tRNAs. The sequence is that of Large ribosomal subunit protein uL5 from Nanoarchaeum equitans (strain Kin4-M).